Reading from the N-terminus, the 500-residue chain is Oogenesin-3 (500 aa).

One copy of the LRR 1; degenerate repeat lies at 116–143 (RCKLRVLKWRDEQHDFCGIWPGSHEAED). One copy of the LRR 2; degenerate repeat lies at 198–222 (HLLCRKLVIETLTKDTVIEIFKIVN). Residues 223-248 (ADCIQELELYSLCLEDLAFLNPYLRQ) form an LRR 3; degenerate repeat. One copy of the LRR 4; degenerate repeat lies at 249 to 285 (MDNLLELTLDHVTDSLSMGDSEMCEEEMITLVSQLPT). LRR repeat units follow at residues 286–311 (FPCLQKLCVNDVYFIYGNLNEILRCL), 312–343 (KKPLVSFCISNCELSQSDLDCLPYCLNIFELK), 344–367 (CLYLIDIPLNHLCLDPLGFLLESV), 368–395 (RHTLECLELKSCDMGEPQFNALLPALSQ), and 396–420 (CSHLTDVSFWENELSLLFLKQLLQH).

Belongs to the PRAME family. As to expression, expressed in ovary, specifically in oocytes. Detected in follicles with two layers of granulosa cells, and are present in early as well as large antral follicles.

The protein is Oogenesin-3 of Mus musculus (Mouse).